Reading from the N-terminus, the 420-residue chain is UDP-N-acetylglucosamine 1-carboxyvinyltransferase (420 aa).

Residue 22–23 (KN) participates in phosphoenolpyruvate binding. Arginine 93 contacts UDP-N-acetyl-alpha-D-glucosamine. The active-site Proton donor is cysteine 117. Position 117 is a 2-(S-cysteinyl)pyruvic acid O-phosphothioketal (cysteine 117). UDP-N-acetyl-alpha-D-glucosamine contacts are provided by aspartate 307 and isoleucine 329.

The protein belongs to the EPSP synthase family. MurA subfamily.

Its subcellular location is the cytoplasm. The enzyme catalyses phosphoenolpyruvate + UDP-N-acetyl-alpha-D-glucosamine = UDP-N-acetyl-3-O-(1-carboxyvinyl)-alpha-D-glucosamine + phosphate. It functions in the pathway cell wall biogenesis; peptidoglycan biosynthesis. Cell wall formation. Adds enolpyruvyl to UDP-N-acetylglucosamine. The sequence is that of UDP-N-acetylglucosamine 1-carboxyvinyltransferase from Shewanella pealeana (strain ATCC 700345 / ANG-SQ1).